A 280-amino-acid chain; its full sequence is Nitrogenase iron protein (280 aa).

An ATP-binding site is contributed by 8-15 (GKGGIGKS). C95 is a binding site for [4Fe-4S] cluster. The residue at position 98 (R98) is an ADP-ribosylarginine; by dinitrogenase reductase ADP-ribosyltransferase. C128 lines the [4Fe-4S] cluster pocket.

This sequence belongs to the NifH/BchL/ChlL family. As to quaternary structure, homodimer. It depends on [4Fe-4S] cluster as a cofactor. The reversible ADP-ribosylation of Arg-98 inactivates the nitrogenase reductase and regulates nitrogenase activity.

It carries out the reaction N2 + 8 reduced [2Fe-2S]-[ferredoxin] + 16 ATP + 16 H2O = H2 + 8 oxidized [2Fe-2S]-[ferredoxin] + 2 NH4(+) + 16 ADP + 16 phosphate + 6 H(+). Its function is as follows. The key enzymatic reactions in nitrogen fixation are catalyzed by the nitrogenase complex, which has 2 components: the iron protein and the molybdenum-iron protein. This is Nitrogenase iron protein from Methanospirillum hungatei JF-1 (strain ATCC 27890 / DSM 864 / NBRC 100397 / JF-1).